We begin with the raw amino-acid sequence, 243 residues long: Pyridoxine 5'-phosphate synthase (243 aa).

3-amino-2-oxopropyl phosphate is bound at residue Asn-7. 9 to 10 (DH) contributes to the 1-deoxy-D-xylulose 5-phosphate binding site. 3-amino-2-oxopropyl phosphate is bound at residue Arg-18. The active-site Proton acceptor is His-43. Residues Arg-45 and His-50 each coordinate 1-deoxy-D-xylulose 5-phosphate. Residue Glu-70 is the Proton acceptor of the active site. 1-deoxy-D-xylulose 5-phosphate is bound at residue Thr-100. His-191 serves as the catalytic Proton donor. Residues Gly-192 and 213-214 (GH) contribute to the 3-amino-2-oxopropyl phosphate site.

This sequence belongs to the PNP synthase family. In terms of assembly, homooctamer; tetramer of dimers.

It is found in the cytoplasm. It carries out the reaction 3-amino-2-oxopropyl phosphate + 1-deoxy-D-xylulose 5-phosphate = pyridoxine 5'-phosphate + phosphate + 2 H2O + H(+). The protein operates within cofactor biosynthesis; pyridoxine 5'-phosphate biosynthesis; pyridoxine 5'-phosphate from D-erythrose 4-phosphate: step 5/5. Its function is as follows. Catalyzes the complicated ring closure reaction between the two acyclic compounds 1-deoxy-D-xylulose-5-phosphate (DXP) and 3-amino-2-oxopropyl phosphate (1-amino-acetone-3-phosphate or AAP) to form pyridoxine 5'-phosphate (PNP) and inorganic phosphate. This is Pyridoxine 5'-phosphate synthase from Magnetococcus marinus (strain ATCC BAA-1437 / JCM 17883 / MC-1).